We begin with the raw amino-acid sequence, 209 residues long: Urease accessory protein UreG (209 aa).

Residue 16–23 participates in GTP binding; it reads GPVGSGKT.

It belongs to the SIMIBI class G3E GTPase family. UreG subfamily. Homodimer. UreD, UreF and UreG form a complex that acts as a GTP-hydrolysis-dependent molecular chaperone, activating the urease apoprotein by helping to assemble the nickel containing metallocenter of UreC. The UreE protein probably delivers the nickel.

It is found in the cytoplasm. Facilitates the functional incorporation of the urease nickel metallocenter. This process requires GTP hydrolysis, probably effectuated by UreG. The sequence is that of Urease accessory protein UreG from Blochmanniella floridana.